Consider the following 168-residue polypeptide: Pleiotrophin (168 aa).

Positions 1–32 (MQTPQYLQQRRKFAAAFLAFIFILAAVDTAEA) are cleaved as a signal peptide. 5 disulfides stabilise this stretch: Cys47-Cys76, Cys55-Cys85, Cys62-Cys89, Cys99-Cys131, and Cys109-Cys141. Chondroitin sulfate binding regions lie at residues 92 to 99 (KKQFGAEC) and 123 to 131 (KRALHNADC). The tract at residues 141-168 (CGKLTKSKPQAESKKKKKEGKKQEKMLD) is disordered. Positions 147 to 168 (SKPQAESKKKKKEGKKQEKMLD) are chondroitin sulfate A binding.

Interacts with ALK and NEK6. Interacts with PTPRZ1 (via chondroitin sulfate groups); promotes formation of homooligomers; oligomerization impairs tyrosine phosphatase activity. Forms a complex with PTPRZ1 and CTNNB1; this complex inactivates PTPRZ1 protein tyrosine phosphatase activity through PTN interaction and stimulates tyrosine phosphorylation of CTNNB1. Interacts with ITGB3 and ITGA5. Forms a complex with PTPRZ1 and integrin alpha-V/beta-3 (ITGAV:ITGB3) that stimulates endothelial cell migration through ITGB3 'Tyr-773' phosphorylation. Interacts with SDC3 (via heparan sulfate chains); this interaction mediates the neurite outgrowth-promoting signal from PTN to the cytoskeleton of growing neurites; this interaction mediates osteoblast recruitment. Interacts with GPC2 (via heparan sulfate); this interaction promotes neurite outgrowth through binding of PTN with chondroitin sulfate of proteoglycans, thereby releasing PTPRS of chondroitin sulfate proteoglycans (CSPGs) and leading to binding with heparan sulfate of GPC2. In terms of processing, phosphorylated by NEK6.

It localises to the secreted. Secreted growth factor that mediates its signal through cell-surface proteoglycan and non-proteoglycan receptors. Binds cell-surface proteoglycan receptor via their chondroitin sulfate (CS) groups. Thereby regulates many processes like cell proliferation, cell survival, cell growth, cell differentiation and cell migration in several tissues namely neuron and bone. Also plays a role in synaptic plasticity and learning-related behavior by inhibiting long-term synaptic potentiation. Binds PTPRZ1, leading to neutralization of the negative charges of the CS chains of PTPRZ1, inducing PTPRZ1 clustering, thereby causing the dimerization and inactivation of its phosphatase activity leading to increased tyrosine phosphorylation of each of the PTPRZ1 substrates like ALK, CTNNB1 or AFAP1L2 in order to activate the PI3K-AKT pathway. Through PTPRZ1 binding controls oligodendrocyte precursor cell differentiation by enhancing the phosphorylation of AFAP1L2 in order to activate the PI3K-AKT pathway. Forms a complex with PTPRZ1 and integrin alpha-V/beta-3 (ITGAV:ITGB3) that stimulates endothelial cell migration through SRC dephosphorylation and activation that consequently leads to ITGB3 'Tyr-773' phosphorylation. In adult hippocampus promotes dendritic arborization, spine development, and functional integration and connectivity of newborn granule neurons through ALK by activating AKT signaling pathway. Binds GPC2 and chondroitin sulfate proteoglycans (CSPGs) at the neuron surface, leading to abrogation of binding between PTPRS and CSPGs and neurite outgrowth promotion. Binds SDC3 and mediates bone formation by recruiting and attaching osteoblasts/osteoblast precursors to the sites for new bone deposition. Binds ALK and promotes cell survival and cell proliferation through MAPK pathway activation. Inhibits proliferation and enhances differentiation of neural stem cells by inhibiting FGF2-induced fibroblast growth factor receptor signaling pathway. Mediates regulatory mechanisms in normal hemostasis and in hematopoietic regeneration and in maintaining the balance of myeloid and lymphoid regeneration. In addition may play a role in the female reproductive system, auditory response and the progesterone-induced decidualization pathway. This chain is Pleiotrophin, found in Bos taurus (Bovine).